A 594-amino-acid polypeptide reads, in one-letter code: MKLSLTIVSSSFLVAIAHAASVQFNLIAPSATDVKVSVNGQQVALTASDPNVPYFTGSAEVGGTEESFERSLAGITNSTFNDFYNRPVTYANLPQLPWPIENDPQWTRKGKKAEIFDDNYIPSVFFHGDDSQVQDLVKNVPKDKVTGTLTFIGSNYVHSFANVSFGIHGAGKKHNNAKQSWKWTLSGTDTMGNRNHFKLRHMEEDPTQIRERLYADILHAMGTYANETTMVRLFINGQGFGTFNMLDDITEFSYINAMFYGGNPPATLGPLFDGASGADFIYHPGNLDGYSSWKPNKDNANGEGYEAFDPLCKAWNETDYTDNTAIANFEKMFDTEHFLRFMVIEYLTAHWDGYWMGQTNDGAYRDPSDNNKWYFLDQDFDATFGVNLDVPENKDFISVSYKDFPSRYPAGVMANGLLQNADKKAKFEQYLTETVRVLFNNVTLTNRVLAIHNFLSPDLEWDRSIVQQSPGTNFGWTFEQTSQNLWQGVSAPNNNGGGAEWGLVEYIAAKSQAMAKEFNITIVSEPVGPPAANGTATSTNDGGNTHTAAGESKPASSSESSGSKIASQSVSGASRSAVSTVLLGVTALVATAIF.

An N-terminal signal peptide occupies residues 1-19; sequence MKLSLTIVSSSFLVAIAHA. N77, N162, N226, N316, N441, N519, and N533 each carry an N-linked (GlcNAc...) asparagine glycan. Positions 529 to 565 are disordered; the sequence is PPAANGTATSTNDGGNTHTAAGESKPASSSESSGSKI. A compositionally biased stretch (polar residues) spans 534 to 547; it reads GTATSTNDGGNTHT. Positions 548–565 are enriched in low complexity; it reads AAGESKPASSSESSGSKI. The GPI-anchor amidated serine moiety is linked to residue S571. The propeptide at 572–594 is removed in mature form; that stretch reads GASRSAVSTVLLGVTALVATAIF.

In terms of assembly, interacts with host epithelial cell surface HSPA5/BiP protein.

The protein resides in the cell membrane. Its function is as follows. Promotes invasion of host epithelial cells by adhering to receptors on the host cell surface to facilitate endocytosis of the pathogen into host cells. Binds HSPA5/BiP protein on the cell surface of host epithelial cells. The chain is Invasin CotH2 from Rhizopus delemar (strain RA 99-880 / ATCC MYA-4621 / FGSC 9543 / NRRL 43880) (Mucormycosis agent).